A 708-amino-acid polypeptide reads, in one-letter code: Ubiquitin thioesterase Zranb1 (708 aa).

The RanBP2-type 1 zinc finger occupies 3–33 (EHGIKWACEYCTYENWPSAIKCTMCRAQRPS). Residues Cys10, Cys13, Cys24, and Cys27 each contribute to the Zn(2+) site. The disordered stretch occupies residues 38 to 73 (TEDPFKSGSSDVGRDWDPSSTEGGSSPLICPDSSAR). 2 consecutive RanBP2-type zinc fingers follow at residues 84-113 (NANK…QRRT) and 149-178 (RTQH…PRPN). Residues Cys90, Cys93, Cys104, Cys107, Cys155, Cys158, Cys169, and Cys172 each coordinate Zn(2+). Residues 202 to 224 (RWRGGCSSGNSQRRSPPTTKRDS) form a disordered region. Residues 209 to 219 (SGNSQRRSPPT) show a composition bias toward polar residues. 2 ANK repeats span residues 260–290 (KKTD…SGGD) and 313–340 (YTLV…QQAA). One can recognise an OTU domain in the interval 432–592 (LYALWNRTAG…RGHFSALVAM (161 aa)). The active-site Nucleophile is Cys443. His585 serves as the catalytic Proton acceptor.

Belongs to the peptidase C64 family. In terms of assembly, interacts with TRAF6. Interacts with APC.

Its subcellular location is the cytoplasm. It is found in the nucleus. It catalyses the reaction Thiol-dependent hydrolysis of ester, thioester, amide, peptide and isopeptide bonds formed by the C-terminal Gly of ubiquitin (a 76-residue protein attached to proteins as an intracellular targeting signal).. Its function is as follows. Ubiquitin thioesterase, which specifically hydrolyzes 'Lys-29'-linked and 'Lys-33'-linked diubiquitin. Also cleaves 'Lys-63'-linked chains, but with 40-fold less efficiency compared to 'Lys-29'-linked ones. Positive regulator of the Wnt signaling pathway that deubiquitinates APC protein, a negative regulator of Wnt-mediated transcription. Acts as a regulator of autophagy by mediating deubiquitination of PIK3C3/VPS34, thereby promoting autophagosome maturation. Plays a role in the regulation of cell morphology and cytoskeletal organization. Required in the stress fiber dynamics and cell migration. The sequence is that of Ubiquitin thioesterase Zranb1 from Mus musculus (Mouse).